Consider the following 254-residue polypeptide: 5-oxoprolinase subunit A (254 aa).

Belongs to the LamB/PxpA family. In terms of assembly, forms a complex composed of PxpA, PxpB and PxpC.

It carries out the reaction 5-oxo-L-proline + ATP + 2 H2O = L-glutamate + ADP + phosphate + H(+). Catalyzes the cleavage of 5-oxoproline to form L-glutamate coupled to the hydrolysis of ATP to ADP and inorganic phosphate. This is 5-oxoprolinase subunit A from Gluconobacter oxydans (strain 621H) (Gluconobacter suboxydans).